The following is a 335-amino-acid chain: MRN complex-interacting protein (335 aa).

2 disordered regions span residues 75–102 and 118–194; these read EEAV…PSKP and QELD…ALST. Ser-100 carries the phosphoserine modification. Residues 129–142 show a composition bias toward polar residues; it reads TQLSTSAERPSSPA. Residues 145–148 carry the Nuclear localization signal (NLS) motif; it reads RKRK. Over residues 177–194 the composition is skewed to polar residues; the sequence is STGLFGTEQQGTSPALST. The necessary for the association with the MRN complex stretch occupies residues 203 to 230; the sequence is FPRWKLPSPVTQVNAPSSKWARFLLAPG. A disordered region spans residues 273–335; that stretch reads RPPQAIHTTT…TTGEDFDDDL (63 aa). A compositionally biased stretch (basic and acidic residues) spans 286 to 297; the sequence is DRPDRKTREQPR.

It belongs to the MRNIP family. In terms of assembly, associates with the MRE11-RAD50-NBN (MRN) damage-sensing complex; this association is constitutive. Interacts with MRE11. Interacts with NBN. Interacts with RAD50. Post-translationally, phosphorylated; phosphorylation is constitutive and occurs in the absence of any DNA-damaging stimulus. Phosphorylation is necessary for its nuclear retention.

It is found in the nucleus. Its subcellular location is the nucleoplasm. In terms of biological role, plays a role in the cellular response to DNA damage and the maintenance of genome stability through its association with the MRN damage-sensing complex. Promotes chromatin loading and activity of the MRN complex to facilitate subsequent ATM-mediated DNA damage response signaling and DNA repair. The protein is MRN complex-interacting protein of Mus musculus (Mouse).